The primary structure comprises 97 residues: MNIRPLHDRVIVKRKEVESKSAGGIVLTGSAAGKSTRGEVLAVGHGRILENGEVKPLDVKVGDIVIFNDGYGVKAEKIDNEEVLIMSESDILAIVEA.

It belongs to the GroES chaperonin family. In terms of assembly, heptamer of 7 subunits arranged in a ring. Interacts with the chaperonin GroEL.

The protein localises to the cytoplasm. Functionally, together with the chaperonin GroEL, plays an essential role in assisting protein folding. The GroEL-GroES system forms a nano-cage that allows encapsulation of the non-native substrate proteins and provides a physical environment optimized to promote and accelerate protein folding. GroES binds to the apical surface of the GroEL ring, thereby capping the opening of the GroEL channel. The chain is Co-chaperonin GroES from Pectobacterium carotovorum subsp. carotovorum (strain PC1).